The chain runs to 846 residues: Major vault protein beta (846 aa).

Residue Ala-2 is modified to N-acetylalanine. MVP repeat units follow at residues 2-60, 61-115, 116-172, 173-225, 226-280, 281-332, 333-388, 389-458, and 459-521; these read ATPV…IPPR, QYCI…QPVP, LQVI…EPVR, AVII…GFIQ, ALVL…RDIK, AITL…IQNV, NVLS…RRKR, IPLD…STKV, and ITYR…FLGP.

As to quaternary structure, the vault ribonucleoprotein particle is a huge (400 A x 670 A) cage structure of 12.9 MDa. It consists of a dimer of half-vaults, with each half-vault comprising 39 identical major vault protein (MVP) chains. Dictyostelium is one of the few organisms in which the major component is actually two proteins (alpha and beta).

The protein localises to the cytoplasm. It is found in the nucleus. Unknown, though MVP-beta is required for normal vault structure. The polypeptide is Major vault protein beta (mvpB) (Dictyostelium discoideum (Social amoeba)).